Reading from the N-terminus, the 444-residue chain is Acyl-CoA 6-desaturase (444 aa).

Over 1-131 (MGKGGNQGEG…DMNLFKTNHV (131 aa)) the chain is Cytoplasmic. The 78-residue stretch at 18–95 (VPTFSWEEIQ…LKPLLIGELA (78 aa)) folds into the Cytochrome b5 heme-binding domain. A helical membrane pass occupies residues 132–152 (FFLLLLAHIIALESIAWFTVF). The Lumenal portion of the chain corresponds to 153–157 (YFGNG). The helical transmembrane segment at 158 to 178 (WISTLITAFVLATSQAQAGWL) threads the bilayer. Residues 179–264 (QHDYGHLSVY…KYLPYNHQHE (86 aa)) lie on the Cytoplasmic side of the membrane. A Histidine box-1 motif is present at residues 180–184 (HDYGH). A Histidine box-2 motif is present at residues 217–221 (HFQHH). A helical membrane pass occupies residues 265-285 (YFFLIGPPLLIPMYFQYQIIM). At 286 to 305 (TMIVHKNWVDLAWAISYYIR) the chain is on the lumenal side. A helical transmembrane segment spans residues 306–326 (FFITYIPFYGILGALLFLNFI). Over 327–444 (RFLESHWFVW…KLWLDAYLHK (118 aa)) the chain is Cytoplasmic. The Histidine box-3 signature appears at 382 to 386 (QIEHH).

This sequence belongs to the fatty acid desaturase type 1 family.

Its subcellular location is the endoplasmic reticulum membrane. The enzyme catalyses (9Z,12Z)-octadecadienoyl-CoA + 2 Fe(II)-[cytochrome b5] + O2 + 2 H(+) = (6Z,9Z,12Z)-octadecatrienoyl-CoA + 2 Fe(III)-[cytochrome b5] + 2 H2O. It catalyses the reaction (9Z,12Z,15Z)-octadecatrienoyl-CoA + 2 Fe(II)-[cytochrome b5] + O2 + 2 H(+) = (6Z,9Z,12Z,15Z)-octadecatetraenoyl-CoA + 2 Fe(III)-[cytochrome b5] + 2 H2O. It carries out the reaction (9Z,12Z,15Z,18Z,21Z)-tetracosapentaenoyl-CoA + 2 Fe(II)-[cytochrome b5] + O2 + 2 H(+) = (6Z,9Z,12Z,15Z,18Z,21Z)-tetracosahexaenoyl-CoA + 2 Fe(III)-[cytochrome b5] + 2 H2O. The catalysed reaction is (11E)-octadecenoyl-CoA + 2 Fe(II)-[cytochrome b5] + O2 + 2 H(+) = (6Z,11E)-octadecadienoyl-CoA + 2 Fe(III)-[cytochrome b5] + 2 H2O. The enzyme catalyses (11Z,14Z)-eicosadienoyl-CoA + 2 Fe(II)-[cytochrome b5] + O2 + 2 H(+) = (8Z,11Z,14Z)-eicosatrienoyl-CoA + 2 Fe(III)-[cytochrome b5] + 2 H2O. It catalyses the reaction (11Z,14Z,17Z)-eicosatrienoyl-CoA + 2 Fe(II)-[cytochrome b5] + O2 + 2 H(+) = (8Z,11Z,14Z,17Z)-eicosatetraenoyl-CoA + 2 Fe(III)-[cytochrome b5] + 2 H2O. It participates in lipid metabolism; polyunsaturated fatty acid biosynthesis. In terms of biological role, involved in the biosynthesis of highly unsaturated fatty acids (HUFA) from the essential polyunsaturated fatty acids (PUFA) linoleic acid (LA) (18:2n-6) and alpha-linolenic acid (ALA) (18:3n-3) precursors, acting as a fatty acyl-coenzyme A (CoA) desaturase that introduces a cis double bond at carbon 6 of the fatty acyl chain. Catalyzes the first and rate limiting step in this pathway which is the desaturation of LA (18:2n-6) and ALA (18:3n-3) into gamma-linoleate (GLA) (18:3n-6) and stearidonate (18:4n-3), respectively. Subsequently, in the biosynthetic pathway of HUFA n-3 series, it desaturates tetracosapentaenoate (24:5n-3) to tetracosahexaenoate (24:6n-3), which is then converted to docosahexaenoate (DHA)(22:6n-3), an important lipid for nervous system function. It can also desaturate (11E)-octadecenoate (trans-vaccenoate) at carbon 6 generating (6Z,11E)-octadecadienoate. In addition to Delta-6 activity, this enzyme exhibits Delta-8 activity with slight biases toward n-3 fatty acyl-CoA substrates. The polypeptide is Acyl-CoA 6-desaturase (FADS2) (Pongo abelii (Sumatran orangutan)).